A 214-amino-acid polypeptide reads, in one-letter code: MSFIQRRLLSQTLFLRSQVGSLPLYISPEVQVSINALSMPRIIRKGRTSMNISQNITVKGPKGELSVEVPDFLHLDKDEKHGKINVTVQNSEDKHQRSMWGTVRSLINNHIIGVTEGHLAVLRFVGTGYRAQLENDGKFVNVKVGASIKQGLDVPEGIVVKTPAPTSLIIEGCNKQQVLLFAAKLRKFHPPEPYKGKGIYVNDETIKLKDKKIK.

Residues 1-16 (MSFIQRRLLSQTLFLR) constitute a mitochondrion transit peptide.

This sequence belongs to the universal ribosomal protein uL6 family. As to quaternary structure, component of the mitochondrial large ribosomal subunit (mt-LSU). Mature yeast 74S mitochondrial ribosomes consist of a small (37S) and a large (54S) subunit. The 37S small subunit contains a 15S ribosomal RNA (15S mt-rRNA) and 34 different proteins. The 54S large subunit contains a 21S rRNA (21S mt-rRNA) and 46 different proteins.

It localises to the mitochondrion. In terms of biological role, component of the mitochondrial ribosome (mitoribosome), a dedicated translation machinery responsible for the synthesis of mitochondrial genome-encoded proteins, including at least some of the essential transmembrane subunits of the mitochondrial respiratory chain. The mitoribosomes are attached to the mitochondrial inner membrane and translation products are cotranslationally integrated into the membrane. This is Large ribosomal subunit protein uL6m (MRPL6) from Saccharomyces cerevisiae (strain ATCC 204508 / S288c) (Baker's yeast).